A 510-amino-acid polypeptide reads, in one-letter code: Proline--tRNA ligase 2 (510 aa).

Belongs to the class-II aminoacyl-tRNA synthetase family. ProS type 3 subfamily. As to quaternary structure, homodimer.

It is found in the cytoplasm. It catalyses the reaction tRNA(Pro) + L-proline + ATP = L-prolyl-tRNA(Pro) + AMP + diphosphate. Catalyzes the attachment of proline to tRNA(Pro) in a two-step reaction: proline is first activated by ATP to form Pro-AMP and then transferred to the acceptor end of tRNA(Pro). This Anaeromyxobacter dehalogenans (strain 2CP-C) protein is Proline--tRNA ligase 2.